The following is a 219-amino-acid chain: Leukocyte surface antigen CD53 (219 aa).

The Cytoplasmic portion of the chain corresponds to 1-11 (MGMSSLKLLKF). A helical membrane pass occupies residues 12-32 (VLFFFNLIFWFCGCCILGLGI). The Extracellular segment spans residues 33–54 (YLLIHSKFGVLFHNLPSLTLGN). Residues 55–69 (VLVIVGSVIMVVAFL) form a helical membrane-spanning segment. Over 70-80 (GCMGSIKENKC) the chain is Cytoplasmic. Residues 81–106 (LLMSFFVLLLIILLAEVTLAILLFVY) form a helical membrane-spanning segment. Topologically, residues 107 to 181 (EQKLKEYVAE…IQAKQWFHSN (75 aa)) are extracellular. N-linked (GlcNAc...) asparagine glycosylation is found at asparagine 129 and asparagine 148. A helical transmembrane segment spans residues 182-206 (FLYIGITTICVCVIQVLGMSFALTL). Residues 207–219 (NCQIDKTSQVLGL) lie on the Cytoplasmic side of the membrane.

The protein belongs to the tetraspanin (TM4SF) family. As to quaternary structure, interacts with SCIMP. Interacts with CD45/PTPRC. Interacts with IL7R. Interacts with RBL2 and PPP2CA.

It is found in the cell membrane. The protein resides in the cell junction. It localises to the membrane. Its subcellular location is the synapse. Functionally, structural component of specialized membrane microdomains known as tetraspanin-enriched microdomains (TERMs), which act as platforms for receptor clustering and signaling. Participates thereby in diverse biological functions such as cell signal transduction, adhesion, migration and protein trafficking. Plays a role in the activation of monocytes and B-cells. Acts as an essential regulator of B-cell development by promoting interleukin-7 receptor/IL7R signaling. Also promotes, in B-cells, the BCR signaling by recruiting PKC to the plasma membrane in order to phosphorylate its substrates. Plays an essential role in B- and T-cells homing to lymph nodes by stabilizing L-selectin/SELL cell surface expression. Also mediates metabolic and inflammatory functions in hepatocytes and adipose tissue by promoting TNF-alpha and LPS signaling independent of the immune compartment. This chain is Leukocyte surface antigen CD53 (CD53), found in Bos taurus (Bovine).